Consider the following 443-residue polypeptide: Glutamate--tRNA ligase 1 (443 aa).

A 'HIGH' region motif is present at residues 8–18 (PSPTGRLHVGN). The short motif at 239-243 (KLSKR) is the 'KMSKS' region element. K242 serves as a coordination point for ATP.

The protein belongs to the class-I aminoacyl-tRNA synthetase family. Glutamate--tRNA ligase type 1 subfamily. Monomer.

The protein localises to the cytoplasm. The catalysed reaction is tRNA(Glu) + L-glutamate + ATP = L-glutamyl-tRNA(Glu) + AMP + diphosphate. Functionally, catalyzes the attachment of glutamate to tRNA(Glu) in a two-step reaction: glutamate is first activated by ATP to form Glu-AMP and then transferred to the acceptor end of tRNA(Glu). This chain is Glutamate--tRNA ligase 1, found in Rhizorhabdus wittichii (strain DSM 6014 / CCUG 31198 / JCM 15750 / NBRC 105917 / EY 4224 / RW1) (Sphingomonas wittichii).